Here is a 410-residue protein sequence, read N- to C-terminus: uncharacterized protein (410 aa).

Transmembrane regions (helical) follow at residues 14–34 (IIIGTIFGRMATSMSIPFLAI), 48–68 (GLVIAASSSVGILASFYGGYI), 82–102 (IFGWMLVFAGFAAASNLWVFF), 140–160 (YAAINIGVVFGPVLGLYFGSS), 164–184 (TPFLVPAVIYGLYGIVLALQF), 212–232 (YLFTIALVGITLCTFGYSQFS), 251–271 (LYGLMLTLNAIVVLATQFPIV), 279–299 (PLCSLMLGNVMVSISMAIFTV), 303–323 (VPSIVMIVITFTIGEVLLFSM), 342–362 (GAIGFSQLGNVIGPWVGGICI), and 371–391 (IYIFSVLSGITLLGLPFLAFA).

The protein belongs to the major facilitator superfamily. TCR/Tet family.

Its subcellular location is the cell membrane. This is an uncharacterized protein from Bacillus subtilis (strain 168).